Here is a 624-residue protein sequence, read N- to C-terminus: Actin-related protein 8 (624 aa).

Methionine 1 is modified (N-acetylmethionine). The segment covering 1–25 has biased composition (basic and acidic residues); the sequence is MTQAEKGDAENGKEKGGEKEKEQRG. The segment at 1–29 is disordered; it reads MTQAEKGDAENGKEKGGEKEKEQRGVKRP. Residues serine 55 and threonine 56 each coordinate ATP. The residue at position 132 (serine 132) is a Phosphoserine. 283 to 286 is an ATP binding site; it reads DVGD. Position 412 is a phosphoserine (serine 412). The segment at 430–460 is disordered; it reads SKQEQSAKATADRKSASKPIGFEGDLRGQSS.

It belongs to the actin family. ARP8 subfamily. As to quaternary structure, component of the chromatin remodeling INO80 complex; specifically part of a complex module associated with the DBINO domain of INO80. Exists as monomers and dimers, but the dimer is most probably the biologically relevant form required for stable interactions with histones that exploits the twofold symmetry of the nucleosome core.

It localises to the nucleus. The protein localises to the chromosome. Plays an important role in the functional organization of mitotic chromosomes. Exhibits low basal ATPase activity, and unable to polymerize. In terms of biological role, proposed core component of the chromatin remodeling INO80 complex which is involved in transcriptional regulation, DNA replication and probably DNA repair. Required for the recruitment of INO80 (and probably the INO80 complex) to sites of DNA damage Strongly prefer nucleosomes and H3-H4 tetramers over H2A-H2B dimers, suggesting it may act as a nucleosome recognition module within the complex. The polypeptide is Actin-related protein 8 (ACTR8) (Ailuropoda melanoleuca (Giant panda)).